Here is a 153-residue protein sequence, read N- to C-terminus: Glucose-6-phosphate 1-dehydrogenase (153 aa).

R21 and K120 together coordinate NADP(+). K120 provides a ligand contact to D-glucose 6-phosphate.

Belongs to the glucose-6-phosphate dehydrogenase family.

It is found in the cytoplasm. It localises to the cytosol. The enzyme catalyses D-glucose 6-phosphate + NADP(+) = 6-phospho-D-glucono-1,5-lactone + NADPH + H(+). The protein operates within carbohydrate degradation; pentose phosphate pathway; D-ribulose 5-phosphate from D-glucose 6-phosphate (oxidative stage): step 1/3. In terms of biological role, cytosolic glucose-6-phosphate dehydrogenase that catalyzes the first and rate-limiting step of the oxidative branch within the pentose phosphate pathway/shunt, an alternative route to glycolysis for the dissimilation of carbohydrates and a major source of reducing power and metabolic intermediates for fatty acid and nucleic acid biosynthetic processes. This is Glucose-6-phosphate 1-dehydrogenase (ZW) from Sarcophaga bullata (Grey flesh fly).